A 202-amino-acid chain; its full sequence is B-cell CLL/lymphoma 7 protein family member B (202 aa).

Residues Asp-53 to Ser-202 are disordered. The span at Glu-90–Asp-99 shows a compositional bias: polar residues. The segment covering Ser-107–Pro-123 has biased composition (low complexity). Residues Ser-114, Ser-118, Ser-120, Ser-122, Ser-127, Ser-148, and Ser-152 each carry the phosphoserine modification.

Belongs to the BCL7 family.

Functionally, positive regulator of apoptosis. Plays a role in the Wnt signaling pathway, negatively regulating the expression of Wnt signaling components CTNNB1 and HMGA1. Involved in cell cycle progression, maintenance of the nuclear structure and stem cell differentiation. May play a role in lung tumor development or progression. This is B-cell CLL/lymphoma 7 protein family member B (BCL7B) from Bos taurus (Bovine).